Reading from the N-terminus, the 508-residue chain is Photosystem II CP47 reaction center protein (508 aa).

Transmembrane regions (helical) follow at residues 21–36, 101–115, 140–156, 203–218, 237–252, and 457–472; these read AVHIMHTALVAGWAGS, IVFSGLCFLAAIWHW, GIHLFLAGLACFGFGAF, IAAGTLGILAGLFHLS, VLSSSIAAVFFAAFVV, and SFALLFFFGHIWHGSR.

It belongs to the PsbB/PsbC family. PsbB subfamily. PSII is composed of 1 copy each of membrane proteins PsbA, PsbB, PsbC, PsbD, PsbE, PsbF, PsbH, PsbI, PsbJ, PsbK, PsbL, PsbM, PsbT, PsbX, PsbY, PsbZ, Psb30/Ycf12, at least 3 peripheral proteins of the oxygen-evolving complex and a large number of cofactors. It forms dimeric complexes. The cofactor is Binds multiple chlorophylls. PSII binds additional chlorophylls, carotenoids and specific lipids..

It is found in the plastid. The protein resides in the chloroplast thylakoid membrane. Its function is as follows. One of the components of the core complex of photosystem II (PSII). It binds chlorophyll and helps catalyze the primary light-induced photochemical processes of PSII. PSII is a light-driven water:plastoquinone oxidoreductase, using light energy to abstract electrons from H(2)O, generating O(2) and a proton gradient subsequently used for ATP formation. The protein is Photosystem II CP47 reaction center protein of Lotus japonicus (Lotus corniculatus var. japonicus).